The chain runs to 434 residues: Glutamate-1-semialdehyde 2,1-aminomutase 1 (434 aa).

Lys-270 bears the N6-(pyridoxal phosphate)lysine mark.

The protein belongs to the class-III pyridoxal-phosphate-dependent aminotransferase family. HemL subfamily. As to quaternary structure, homodimer. Requires pyridoxal 5'-phosphate as cofactor.

It is found in the cytoplasm. The catalysed reaction is (S)-4-amino-5-oxopentanoate = 5-aminolevulinate. The protein operates within porphyrin-containing compound metabolism; protoporphyrin-IX biosynthesis; 5-aminolevulinate from L-glutamyl-tRNA(Glu): step 2/2. The polypeptide is Glutamate-1-semialdehyde 2,1-aminomutase 1 (Bacillus thuringiensis subsp. konkukian (strain 97-27)).